Here is a 295-residue protein sequence, read N- to C-terminus: Protease HtpX (295 aa).

Helical transmembrane passes span 4–24 and 41–61; these read ILLF…TLSL and SQLL…SLFI. His147 provides a ligand contact to Zn(2+). Residue Glu148 is part of the active site. His151 is a Zn(2+) binding site. 2 helical membrane passes run 158–178 and 199–219; these read VTLA…ARII and IATI…VMWF. Glu224 is a binding site for Zn(2+).

It belongs to the peptidase M48B family. Zn(2+) is required as a cofactor.

Its subcellular location is the cell inner membrane. This is Protease HtpX from Pseudomonas fluorescens (strain Pf0-1).